Reading from the N-terminus, the 136-residue chain is Protein NrdI (136 aa).

The protein belongs to the NrdI family.

Functionally, probably involved in ribonucleotide reductase function. The polypeptide is Protein NrdI (Erwinia tasmaniensis (strain DSM 17950 / CFBP 7177 / CIP 109463 / NCPPB 4357 / Et1/99)).